Here is a 172-residue protein sequence, read N- to C-terminus: Protein sym-1 (172 aa).

A run of 5 helical transmembrane segments spans residues 13-33 (PLLT…VAAQ), 52-72 (MVLY…RFLQ), 94-114 (GLFA…LEGT), 128-148 (LSTN…VVPL), and 152-172 (VLFV…LNGQ).

This sequence belongs to the peroxisomal membrane protein PXMP2/4 family.

It localises to the mitochondrion inner membrane. Functionally, may be involved in cellular response to stress. Required to maintain mitochondrial DNA (mtDNA) integrity and stability. The sequence is that of Protein sym-1 (sym-1) from Neurospora crassa (strain ATCC 24698 / 74-OR23-1A / CBS 708.71 / DSM 1257 / FGSC 987).